Reading from the N-terminus, the 522-residue chain is Light-independent protochlorophyllide reductase subunit B (522 aa).

[4Fe-4S] cluster is bound at residue Asp-36. Asp-274 acts as the Proton donor in catalysis. Residue 409–410 (GL) coordinates substrate. Positions 426–464 (DEAGPSHHGGKAVPASAPRAEATADEGSTPEEAVPPVAA) are disordered. Over residues 455-464 (PEEAVPPVAA) the composition is skewed to low complexity.

Belongs to the ChlB/BchB/BchZ family. Protochlorophyllide reductase is composed of three subunits; BchL, BchN and BchB. Forms a heterotetramer of two BchB and two BchN subunits. [4Fe-4S] cluster serves as cofactor.

The catalysed reaction is chlorophyllide a + oxidized 2[4Fe-4S]-[ferredoxin] + 2 ADP + 2 phosphate = protochlorophyllide a + reduced 2[4Fe-4S]-[ferredoxin] + 2 ATP + 2 H2O. It participates in porphyrin-containing compound metabolism; bacteriochlorophyll biosynthesis (light-independent). In terms of biological role, component of the dark-operative protochlorophyllide reductase (DPOR) that uses Mg-ATP and reduced ferredoxin to reduce ring D of protochlorophyllide (Pchlide) to form chlorophyllide a (Chlide). This reaction is light-independent. The NB-protein (BchN-BchB) is the catalytic component of the complex. The chain is Light-independent protochlorophyllide reductase subunit B from Cereibacter sphaeroides (strain ATCC 17025 / ATH 2.4.3) (Rhodobacter sphaeroides).